The chain runs to 100 residues: Esterase PE11 (100 aa).

Residues 4-94 (VTTRPDSIGE…TSYWLTELAN (91 aa)) enclose the PE domain.

Belongs to the mycobacterial PE family.

It is found in the secreted. Its subcellular location is the cell wall. The enzyme catalyses an acetyl ester + H2O = an aliphatic alcohol + acetate + H(+). It carries out the reaction a butanoate ester + H2O = an aliphatic alcohol + butanoate + H(+). It catalyses the reaction an octanoate ester + H2O = an aliphatic alcohol + octanoate + H(+). In terms of biological role, involved in cell wall lipids remodeling and in virulence. Restricts the biofilm growth and is essential for the optimal intracellular survival of M.tuberculosis. Shows esterase activity with a preference for short-chain esters, particularly pNP-acetate (C2) and pNP-butyrate (C4). Has weaker activity with pNP-octanoate (C8), pNP-laurate (C12) and pNP-myristate (C14). Shows weak long-chain triacylglycerol (TAG) hydrolase activity in vitro. Not necessary for PPE17 stability or for its localization on the mycobacterial surface. The polypeptide is Esterase PE11 (Mycobacterium tuberculosis (strain ATCC 25618 / H37Rv)).